Reading from the N-terminus, the 440-residue chain is Indoleamine 2,3-dioxygenase qulI (440 aa).

His-347 contributes to the heme binding site.

This sequence belongs to the indoleamine 2,3-dioxygenase family. In terms of assembly, monomer. Heme is required as a cofactor.

It catalyses the reaction D-tryptophan + O2 = N-formyl-D-kynurenine. The catalysed reaction is L-tryptophan + O2 = N-formyl-L-kynurenine. Its pathway is secondary metabolite biosynthesis. Indoleamine 2,3-dioxygenase; part of the gene cluster that mediates the biosynthesis of quinolactacin A2 (QUL A2), a fungal alkaloid that features a quinolone-gamma-lactam hybrid, which is a potential pharmacophore for the treatment of cancer and Alzheimer's disease. The quinolone-gamma-lactam hybrid scaffold is synthesized from the combination of L-isoleucine (L-Ile) and the nonproteinogenic amino acid L-kynurenine, followed by quinolone cyclization, oxidative decarboxylation, and lactam formation. Additionally, the N-methyl group is derived from methionine, which might be catalyzed by an S-adenosylmethionine (SAM)-dependent methyltransferase. Bioconversion of L-tryptophan to L-kynurenine could be catalyzed by the indoleamine-2,3-dioxygenase (IDO) qulI to produce an unstable product, N-formyl-L-kynurenine, followed by kynurenine formamidase catalyzed hydrolysis. QulM then acts as a methyltransferase that methylates L-kynurenine at the N-4 position. The FMN-dependent alpha-hydroxy acid dehydrogenase qulF than functions as an oxidative decarboxylase which converts N-methylkynurenine into 2-aminobenzoylacetamide via 2 tandem reactions, including dehydrogenation and decarboxylation. An amidase located outside of the qul gene cluster further produces the unstable beta-keto acid precursor N-methyl-2-aminobenzoylacetate, which could be spontaneously dehydrated to form N-methyl-4-hydroxy-2-quinolone. The NRPS qulB is able to incorporate N-methyl-2-aminobenzoylacetate and efficiently compete with the spontaneous reaction. By further extending the beta-keto acid with L-Ile, qulA performs a Dieckmann condensation to form the gamma-lactam ring and release a 4-ketopyrrolidinone intermediate from the assembly line. This intermediate could plausibly further undergo a spontaneous cyclization to yield the final quinolone-gamma-lactam hybrid structure. The polypeptide is Indoleamine 2,3-dioxygenase qulI (Penicillium citrinum).